A 311-amino-acid polypeptide reads, in one-letter code: Aspartate carbamoyltransferase catalytic subunit (311 aa).

2 residues coordinate carbamoyl phosphate: R55 and T56. K85 serves as a coordination point for L-aspartate. R106, H135, and Q138 together coordinate carbamoyl phosphate. L-aspartate contacts are provided by R168 and R230. Positions 268 and 269 each coordinate carbamoyl phosphate.

It belongs to the aspartate/ornithine carbamoyltransferase superfamily. ATCase family. Heterododecamer (2C3:3R2) of six catalytic PyrB chains organized as two trimers (C3), and six regulatory PyrI chains organized as three dimers (R2).

The enzyme catalyses carbamoyl phosphate + L-aspartate = N-carbamoyl-L-aspartate + phosphate + H(+). Its pathway is pyrimidine metabolism; UMP biosynthesis via de novo pathway; (S)-dihydroorotate from bicarbonate: step 2/3. Functionally, catalyzes the condensation of carbamoyl phosphate and aspartate to form carbamoyl aspartate and inorganic phosphate, the committed step in the de novo pyrimidine nucleotide biosynthesis pathway. This Salmonella dublin (strain CT_02021853) protein is Aspartate carbamoyltransferase catalytic subunit.